Reading from the N-terminus, the 547-residue chain is Cytochrome P450 monooxygenase 128 (547 aa).

A helical transmembrane segment spans residues 9 to 25 (IPWAAGATLLAWAAYKI). N-linked (GlcNAc...) asparagine glycans are attached at residues N336 and N438. C483 contributes to the heme binding site.

This sequence belongs to the cytochrome P450 family. It depends on heme as a cofactor.

It localises to the membrane. Its pathway is secondary metabolite biosynthesis. Its function is as follows. Cytochrome P450 monooxygenase that is able to use 7-ethoxycoumarin and testosterone as substrates for oxidation. The chain is Cytochrome P450 monooxygenase 128 from Postia placenta (strain ATCC 44394 / Madison 698-R) (Brown rot fungus).